The chain runs to 567 residues: Multidrug transporter TPO1_1 (567 aa).

Positions 1–71 are disordered; it reads MVEEISPKYT…NRRMSRILTG (71 aa). Asn120 is a glycosylation site (N-linked (GlcNAc...) asparagine). 12 consecutive transmembrane segments (helical) span residues 128-148, 157-177, 194-214, 224-244, 253-273, 283-303, 358-378, 396-416, 436-456, 471-491, 498-520, and 531-551; these read IICI…SIFA, IYHV…FGFA, GVLV…ATSK, FFGG…FADM, AICL…VMGS, WLEY…ALTF, PLLL…YLML, ELPY…LWYF, LIPM…FCWT, AGSF…NYII, AASA…PLFA, and WAGL…LFFL.

This sequence belongs to the major facilitator superfamily. DHA1 family. Polyamines/proton antiporter (TC 2.A.1.2.16) subfamily.

It is found in the cell membrane. In terms of biological role, multidrug resistance transporter involved in resistance to azole antifungal drugs such as the imidazoles miconazole, ketoconazole, and tioconazole; as well as the triazoles itraconazole and fluconazole. Also plays a role in the resistance to other antifungal drug families such as the polyene amphotericin B, the pyrimide analog flucytosine, the fungicide mancozeb, and the polyamine spermine. Decreases the intracellular accumulation of clotrimazole by mediating its extrusion from cells. Involved in virulence by conferring resistance to the human antimicrobial peptide histatin-5. The chain is Multidrug transporter TPO1_1 from Candida glabrata (strain ATCC 2001 / BCRC 20586 / JCM 3761 / NBRC 0622 / NRRL Y-65 / CBS 138) (Yeast).